The primary structure comprises 168 residues: Cyclic pyranopterin monophosphate synthase (168 aa).

Substrate is bound by residues 75-77 (MCH) and 115-116 (ME). The active site involves D130.

The protein belongs to the MoaC family. Homohexamer; trimer of dimers.

The catalysed reaction is (8S)-3',8-cyclo-7,8-dihydroguanosine 5'-triphosphate = cyclic pyranopterin phosphate + diphosphate. It participates in cofactor biosynthesis; molybdopterin biosynthesis. Its function is as follows. Catalyzes the conversion of (8S)-3',8-cyclo-7,8-dihydroguanosine 5'-triphosphate to cyclic pyranopterin monophosphate (cPMP). The sequence is that of Cyclic pyranopterin monophosphate synthase from Bacillus licheniformis (strain ATCC 14580 / DSM 13 / JCM 2505 / CCUG 7422 / NBRC 12200 / NCIMB 9375 / NCTC 10341 / NRRL NRS-1264 / Gibson 46).